The primary structure comprises 380 residues: E3 ubiquitin-protein ligase Iruka (380 aa).

Residues 50–92 (APEMDSSTAGASGSARSGSSGSGSSGSHDTLSRGSSSSGSQVN) are disordered. Low complexity-rich tracts occupy residues 55 to 68 (SSTAGASGSARSGS) and 74 to 89 (SGSHDTLSRGSSSSGS). An RING-type; atypical zinc finger spans residues 253-294 (CSICWDDFKIDETVRKLPCSHLYHENCIVPWLNLHSTCPICR). The tract at residues 317-367 (EMAADGSNSERRSASTATGTDNPSPANNPSQAAAEGGRTRPDANPAQAARN) is disordered. The span at 338-350 (NPSPANNPSQAAA) shows a compositional bias: low complexity.

In terms of assembly, interacts (via N-terminus) with CG7546 (via Ubl domain).

It carries out the reaction S-ubiquitinyl-[E2 ubiquitin-conjugating enzyme]-L-cysteine + [acceptor protein]-L-lysine = [E2 ubiquitin-conjugating enzyme]-L-cysteine + N(6)-ubiquitinyl-[acceptor protein]-L-lysine.. It participates in protein modification; protein ubiquitination. In terms of biological role, E3 ubiquitin-protein ligase that mediates E2-dependent, 'Lys-48'- and/or 'Lys-63'-linked polyubiquitination of substrates. Recognizes miRNA-empty Ago1 and triggers its degradation via polyubiquitination independently of the Bag6 complex. By targeting miRNA-empty Ago1, eliminates dysfunctional Ago1 not able to bind miRNA and thereby plays a role in the quality control of miRNA-mediated silencing. The chain is E3 ubiquitin-protein ligase Iruka from Drosophila melanogaster (Fruit fly).